Here is a 529-residue protein sequence, read N- to C-terminus: uncharacterized protein (529 aa).

Residues 178–186 (TSGTTGQPK), aspartate 401, arginine 416, and lysine 510 contribute to the ATP site.

It belongs to the ATP-dependent AMP-binding enzyme family.

This is an uncharacterized protein from Bacillus subtilis (strain 168).